A 150-amino-acid chain; its full sequence is Deoxyuridine 5'-triphosphate nucleotidohydrolase (150 aa).

Substrate-binding positions include 69–71, Asn82, 86–88, and Lys96; these read RSG and LID.

This sequence belongs to the dUTPase family. Requires Mg(2+) as cofactor.

The catalysed reaction is dUTP + H2O = dUMP + diphosphate + H(+). It participates in pyrimidine metabolism; dUMP biosynthesis; dUMP from dCTP (dUTP route): step 2/2. Its function is as follows. This enzyme is involved in nucleotide metabolism: it produces dUMP, the immediate precursor of thymidine nucleotides and it decreases the intracellular concentration of dUTP so that uracil cannot be incorporated into DNA. The chain is Deoxyuridine 5'-triphosphate nucleotidohydrolase from Neisseria gonorrhoeae (strain ATCC 700825 / FA 1090).